Consider the following 358-residue polypeptide: Peptide chain release factor 1 (358 aa).

Position 233 is an N5-methylglutamine (Q233). The interval 286–309 (AELASARKSQVGTGDRSERIRTYN) is disordered.

This sequence belongs to the prokaryotic/mitochondrial release factor family. Methylated by PrmC. Methylation increases the termination efficiency of RF1.

The protein localises to the cytoplasm. In terms of biological role, peptide chain release factor 1 directs the termination of translation in response to the peptide chain termination codons UAG and UAA. The protein is Peptide chain release factor 1 of Carboxydothermus hydrogenoformans (strain ATCC BAA-161 / DSM 6008 / Z-2901).